The sequence spans 81 residues: Lantipeptide prochlorosin 1.1 (81 aa).

Residues 1–65 constitute a propeptide that is removed on maturation; the sequence is MSEEQLKAFI…DDDLEGVAGG (65 aa). The beta-methyllanthionine (Cys-Thr) cross-link spans 68–72; sequence CVQGT. A cross-link (beta-methyllanthionine (Thr-Cys)) is located at residues 77-81; that stretch reads TINVC.

Post-translationally, cross-links are proved in vitro, when coepressed in E.coli with the ProcM lanthionine synthetase. The beta-methyllanthionine residues have a DL configuration (with 2S,3S,6R stereochemistry). In terms of processing, maturation of prochlorosin involves the enzymatic conversion of Thr, and Ser into dehydrated AA and the formation of thioether bonds with cysteines. This is followed by membrane translocation and cleavage of the modified precursor.

It localises to the secreted. In terms of biological role, lanthionine-containing peptide (lantipeptide) with unknown function. Does not show antibiotic activity against Lactococcus lactis 117 and Bacillus subtilis 6633 bacteria. Organisms that produce this peptide live in oligotrophic environments at very dilute concentrations, suggesting this peptide is not secreted to influence other bacteria. The polypeptide is Lantipeptide prochlorosin 1.1 (Prochlorococcus marinus (strain MIT 9313)).